The sequence spans 55 residues: ATP synthase F(0) complex subunit 8 (55 aa).

A helical membrane pass occupies residues 8-24 (PWFMIMLMTWFTYSLLI).

The protein belongs to the ATPase protein 8 family. Component of the ATP synthase complex composed at least of ATP5F1A/subunit alpha, ATP5F1B/subunit beta, ATP5MC1/subunit c (homooctomer), MT-ATP6/subunit a, MT-ATP8/subunit 8, ATP5ME/subunit e, ATP5MF/subunit f, ATP5MG/subunit g, ATP5MK/subunit k, ATP5MJ/subunit j, ATP5F1C/subunit gamma, ATP5F1D/subunit delta, ATP5F1E/subunit epsilon, ATP5PF/subunit F6, ATP5PB/subunit b, ATP5PD/subunit d, ATP5PO/subunit OSCP. ATP synthase complex consists of a soluble F(1) head domain (subunits alpha(3) and beta(3)) - the catalytic core - and a membrane F(0) domain - the membrane proton channel (subunits c, a, 8, e, f, g, k and j). These two domains are linked by a central stalk (subunits gamma, delta, and epsilon) rotating inside the F1 region and a stationary peripheral stalk (subunits F6, b, d, and OSCP).

It is found in the mitochondrion membrane. Functionally, subunit 8, of the mitochondrial membrane ATP synthase complex (F(1)F(0) ATP synthase or Complex V) that produces ATP from ADP in the presence of a proton gradient across the membrane which is generated by electron transport complexes of the respiratory chain. ATP synthase complex consist of a soluble F(1) head domain - the catalytic core - and a membrane F(1) domain - the membrane proton channel. These two domains are linked by a central stalk rotating inside the F(1) region and a stationary peripheral stalk. During catalysis, ATP synthesis in the catalytic domain of F(1) is coupled via a rotary mechanism of the central stalk subunits to proton translocation. In vivo, can only synthesize ATP although its ATP hydrolase activity can be activated artificially in vitro. Part of the complex F(0) domain. The sequence is that of ATP synthase F(0) complex subunit 8 from Coturnix japonica (Japanese quail).